We begin with the raw amino-acid sequence, 224 residues long: Adenylate kinase (224 aa).

10–15 lines the ATP pocket; sequence GSGKST. Residues 30–59 form an NMP region; the sequence is SSGDLIRGEIERKSSLGLEMAAYLSRGDLI. AMP is bound by residues S31, R36, 57-59, 83-86, and Q90; these read DLI and GYPR. The interval 124–161 is LID; the sequence is GRRICPNCGAVYHITYNPPKVPGICDVCGTKLIQRTDD. R125 is a binding site for ATP. Residues C128 and C131 each contribute to the Zn(2+) site. 134 to 135 lines the ATP pocket; the sequence is VY. Zn(2+) contacts are provided by C148 and C151. AMP is bound by residues R158 and R169. G197 is an ATP binding site.

This sequence belongs to the adenylate kinase family. In terms of assembly, monomer.

The protein resides in the cytoplasm. The catalysed reaction is AMP + ATP = 2 ADP. The protein operates within purine metabolism; AMP biosynthesis via salvage pathway; AMP from ADP: step 1/1. Functionally, catalyzes the reversible transfer of the terminal phosphate group between ATP and AMP. Plays an important role in cellular energy homeostasis and in adenine nucleotide metabolism. The chain is Adenylate kinase from Thermococcus gammatolerans (strain DSM 15229 / JCM 11827 / EJ3).